The following is a 360-amino-acid chain: MIKLNVNLQDRSYPIYISTDYSQIGKCIQSAKLTGKMVLITDTNVDKYQAEECVKAFSDAGYEVSKFVIPAGEENKNLDTTRDIYKYLLGLKLDRSATLMALGGGVVGDITGFAAATFLRGINFVQIPTTLLAQSDSSVGGKVGVDFEGTKNIIGAFYQPKFVYINVNTLKTLPERELKAGLAEVVKHGVIMDEEFYEYIDYNVHKILNHDEAVLQYIAKRNCSIKASVVEKDEKEGGLRAILNFGHTIGHAIETVMNFELLHGECVSLGMVGAMRMALYLEMIDEQSVNRVKNTLDKIGLPTRLEGIDVDKVYNQMFYDKKIKGSKLTFVLPRKRIGEVIQCTIDDEDLIKRVIASLGE.

NAD(+) is bound by residues 105–109 (GVVGD), 129–130 (TT), Lys142, Lys151, and 169–172 (TLKT). Residues Glu184, His247, and His263 each contribute to the Zn(2+) site.

It belongs to the sugar phosphate cyclases superfamily. Dehydroquinate synthase family. It depends on Co(2+) as a cofactor. Zn(2+) is required as a cofactor. Requires NAD(+) as cofactor.

The protein localises to the cytoplasm. It catalyses the reaction 7-phospho-2-dehydro-3-deoxy-D-arabino-heptonate = 3-dehydroquinate + phosphate. The protein operates within metabolic intermediate biosynthesis; chorismate biosynthesis; chorismate from D-erythrose 4-phosphate and phosphoenolpyruvate: step 2/7. In terms of biological role, catalyzes the conversion of 3-deoxy-D-arabino-heptulosonate 7-phosphate (DAHP) to dehydroquinate (DHQ). This chain is 3-dehydroquinate synthase, found in Acetivibrio thermocellus (strain ATCC 27405 / DSM 1237 / JCM 9322 / NBRC 103400 / NCIMB 10682 / NRRL B-4536 / VPI 7372) (Clostridium thermocellum).